The following is a 229-amino-acid chain: MTGGQGVTIKELPAELRPRERLLAAGVQALSNAELLAILLRTGTRTESALDVARRLLSGPDGLQFLAGATLEELQQQKGIGLAKAAELKAALELGRRLAAFTLSRTVIRNPRDVAGLLLDEMRYLDRENFRTVSLNTKNQVLGIDNVSVGSLNSSLAHPREVFKDPIRRSAAAIILAHNHPSGDPTPSQEDIMVTRRLVEAGHILGIEVLDHLIIGDGRFTSLKERNLL.

Residues 107–229 (VIRNPRDVAG…FTSLKERNLL (123 aa)) form the MPN domain. Positions 178, 180, and 191 each coordinate Zn(2+). Residues 178 to 191 (HNHPSGDPTPSQED) carry the JAMM motif motif.

Belongs to the UPF0758 family.

This is UPF0758 protein Moth_0536 from Moorella thermoacetica (strain ATCC 39073 / JCM 9320).